The primary structure comprises 527 residues: Phospholipase A1-Igamma3, chloroplastic (527 aa).

The N-terminal 52 residues, 1–52, are a transit peptide targeting the chloroplast; sequence MASLSLPITLKNPRFFSSSPQNIFKTQPQTLVLTTKFKTCSIICSSSCTSIS. Over residues 55–65 the composition is skewed to low complexity; that stretch reads TTQQKQSNKQT. Residues 55–82 form a disordered region; it reads TTQQKQSNKQTHVSDNKREEKAEEEEEE. Over residues 66 to 75 the composition is skewed to basic and acidic residues; that stretch reads HVSDNKREEK. The short motif at 300-304 is the GXSXG element; the sequence is GHSLG. The Acyl-ester intermediate role is filled by Ser302. Active-site charge relay system residues include Asp366 and His423.

The protein belongs to the AB hydrolase superfamily. Lipase family. As to expression, highly expressed in flowers. Lower levels in seedlings, leaves and stems.

It localises to the plastid. Its subcellular location is the chloroplast. The enzyme catalyses 1,2-dihexadecanoyl-sn-glycero-3-phosphocholine + H2O = 2-hexadecanoyl-sn-glycero-3-phosphocholine + hexadecanoate + H(+). It catalyses the reaction a 1,2-diacyl-3-O-(beta-D-galactosyl)-sn-glycerol + H2O = an acyl-3-O-(beta-D-galactosyl)-sn-glycerol + a fatty acid + H(+). It carries out the reaction a 1,2-diacyl-3-O-[alpha-D-galactosyl-(1-&gt;6)-beta-D-galactosyl]-sn-glycerol + H2O = acyl-3-O-[alpha-D-galactosyl-(1-&gt;6)-beta-D-galactosyl]-sn-glycerol + a fatty acid + H(+). Its function is as follows. Acylhydrolase that catalyzes the hydrolysis of phosphatidylcholine at the sn-1 position. Moderate activity toward phosphatidylcholine (PC), monogalactosyldiacylglycerol (MGDG), digalactosyldiacylglycerol (DGDG) and triacylglycerol (TAG). The sequence is that of Phospholipase A1-Igamma3, chloroplastic from Arabidopsis thaliana (Mouse-ear cress).